Here is a 66-residue protein sequence, read N- to C-terminus: Cold shock protein CspA (66 aa).

In terms of domain architecture, CSD spans 1–66 (MKQGTVKWFN…GPQAANVVKL (66 aa)).

It is found in the cytoplasm. Functionally, involved in cold stress response. The protein is Cold shock protein CspA (cspA) of Staphylococcus haemolyticus (strain JCSC1435).